Reading from the N-terminus, the 442-residue chain is Exodeoxyribonuclease 7 large subunit (442 aa).

This sequence belongs to the XseA family. As to quaternary structure, heterooligomer composed of large and small subunits.

It localises to the cytoplasm. The enzyme catalyses Exonucleolytic cleavage in either 5'- to 3'- or 3'- to 5'-direction to yield nucleoside 5'-phosphates.. In terms of biological role, bidirectionally degrades single-stranded DNA into large acid-insoluble oligonucleotides, which are then degraded further into small acid-soluble oligonucleotides. The polypeptide is Exodeoxyribonuclease 7 large subunit (Shewanella sediminis (strain HAW-EB3)).